The primary structure comprises 354 residues: Holliday junction branch migration complex subunit RuvB (354 aa).

The tract at residues 4-190 is large ATPase domain (RuvB-L); it reads TDKLAAERII…FGIVARLEFY (187 aa). ATP-binding positions include Leu29, Arg30, Gly71, Lys74, Thr75, Thr76, 137–139, Arg180, Tyr190, and Arg227; that span reads EDY. Position 75 (Thr75) interacts with Mg(2+). The segment at 191–261 is small ATPAse domain (RuvB-S); that stretch reads DADQLARIVR…VADAALAMLD (71 aa). A head domain (RuvB-H) region spans residues 264–354; the sequence is PVGFDLMDRK…RGMWDTPAGK (91 aa). Residues Arg300, Arg319, and Arg324 each coordinate DNA.

The protein belongs to the RuvB family. In terms of assembly, homohexamer. Forms an RuvA(8)-RuvB(12)-Holliday junction (HJ) complex. HJ DNA is sandwiched between 2 RuvA tetramers; dsDNA enters through RuvA and exits via RuvB. An RuvB hexamer assembles on each DNA strand where it exits the tetramer. Each RuvB hexamer is contacted by two RuvA subunits (via domain III) on 2 adjacent RuvB subunits; this complex drives branch migration. In the full resolvosome a probable DNA-RuvA(4)-RuvB(12)-RuvC(2) complex forms which resolves the HJ.

Its subcellular location is the cytoplasm. The enzyme catalyses ATP + H2O = ADP + phosphate + H(+). In terms of biological role, the RuvA-RuvB-RuvC complex processes Holliday junction (HJ) DNA during genetic recombination and DNA repair, while the RuvA-RuvB complex plays an important role in the rescue of blocked DNA replication forks via replication fork reversal (RFR). RuvA specifically binds to HJ cruciform DNA, conferring on it an open structure. The RuvB hexamer acts as an ATP-dependent pump, pulling dsDNA into and through the RuvAB complex. RuvB forms 2 homohexamers on either side of HJ DNA bound by 1 or 2 RuvA tetramers; 4 subunits per hexamer contact DNA at a time. Coordinated motions by a converter formed by DNA-disengaged RuvB subunits stimulates ATP hydrolysis and nucleotide exchange. Immobilization of the converter enables RuvB to convert the ATP-contained energy into a lever motion, pulling 2 nucleotides of DNA out of the RuvA tetramer per ATP hydrolyzed, thus driving DNA branch migration. The RuvB motors rotate together with the DNA substrate, which together with the progressing nucleotide cycle form the mechanistic basis for DNA recombination by continuous HJ branch migration. Branch migration allows RuvC to scan DNA until it finds its consensus sequence, where it cleaves and resolves cruciform DNA. This chain is Holliday junction branch migration complex subunit RuvB, found in Burkholderia ambifaria (strain MC40-6).